The sequence spans 678 residues: Glycine--tRNA ligase beta subunit (678 aa).

It belongs to the class-II aminoacyl-tRNA synthetase family. In terms of assembly, tetramer of two alpha and two beta subunits.

Its subcellular location is the cytoplasm. The catalysed reaction is tRNA(Gly) + glycine + ATP = glycyl-tRNA(Gly) + AMP + diphosphate. In Streptococcus thermophilus (strain ATCC BAA-491 / LMD-9), this protein is Glycine--tRNA ligase beta subunit.